The chain runs to 335 residues: Ferrochelatase (335 aa).

Histidine 211 and glutamate 290 together coordinate Fe cation.

Belongs to the ferrochelatase family.

Its subcellular location is the cytoplasm. It carries out the reaction heme b + 2 H(+) = protoporphyrin IX + Fe(2+). It participates in porphyrin-containing compound metabolism; protoheme biosynthesis; protoheme from protoporphyrin-IX: step 1/1. Functionally, catalyzes the ferrous insertion into protoporphyrin IX. The protein is Ferrochelatase of Sulfurihydrogenibium sp. (strain YO3AOP1).